The primary structure comprises 293 residues: N-acetylneuraminate lyase (293 aa).

The aceneuramate site is built by serine 47, threonine 48, and tyrosine 136. Catalysis depends on tyrosine 136, which acts as the Proton donor. The active-site Schiff-base intermediate with substrate is the lysine 164. Aceneuramate is bound by residues threonine 166, glycine 188, aspartate 190, glutamate 191, serine 207, and tyrosine 251.

Belongs to the DapA family. NanA subfamily. Homotetramer.

It localises to the cytoplasm. The catalysed reaction is aceneuramate = aldehydo-N-acetyl-D-mannosamine + pyruvate. It participates in amino-sugar metabolism; N-acetylneuraminate degradation; D-fructose 6-phosphate from N-acetylneuraminate: step 1/5. Functionally, catalyzes the reversible aldol cleavage of N-acetylneuraminic acid (sialic acid; Neu5Ac) to form pyruvate and N-acetylmannosamine (ManNAc) via a Schiff base intermediate. This is N-acetylneuraminate lyase from Pasteurella multocida (strain Pm70).